The sequence spans 458 residues: Acetyl-CoA decarbonylase/synthase complex subunit gamma (458 aa).

The region spanning 1–59 (MQVTAMDVYRLLPKTNCGKCNEASCMAFATKLIEKEVTLDDCPQLSGDERQKLENLLAP) is the 4Fe-4S domain. Positions 17, 20, 25, and 42 each coordinate [4Fe-4S] cluster.

As to quaternary structure, heterodimer of delta and gamma chains. The ACDS complex is made up of alpha, epsilon, beta, gamma and delta chains with a probable stoichiometry of (alpha(2)epsilon(2))(4)-beta(8)-(gamma(1)delta(1))(8). The cofactor is corrinoid. [4Fe-4S] cluster is required as a cofactor.

The catalysed reaction is 5,6,7,8-tetrahydrosarcinapterin + methyl-Co(III)-[corrinoid Fe-S protein] = 5-methyltetrahydrosarcinapterin + Co(I)-[corrinoid Fe-S protein] + H(+). In terms of biological role, part of a complex that catalyzes the reversible cleavage of acetyl-CoA, allowing autotrophic growth from CO(2). This Methanothermobacter thermautotrophicus (strain ATCC 29096 / DSM 1053 / JCM 10044 / NBRC 100330 / Delta H) (Methanobacterium thermoautotrophicum) protein is Acetyl-CoA decarbonylase/synthase complex subunit gamma.